The chain runs to 398 residues: tRNA-specific 2-thiouridylase MnmA (398 aa).

ATP-binding positions include 18–25 (AMSGGVDS) and leucine 44. Catalysis depends on cysteine 112, which acts as the Nucleophile. Cysteine 112 and cysteine 213 are oxidised to a cystine. An ATP-binding site is contributed by glycine 136. The interval 163–165 (RDQ) is interaction with tRNA. The active-site Cysteine persulfide intermediate is the cysteine 213.

The protein belongs to the MnmA/TRMU family.

It localises to the cytoplasm. It carries out the reaction S-sulfanyl-L-cysteinyl-[protein] + uridine(34) in tRNA + AH2 + ATP = 2-thiouridine(34) in tRNA + L-cysteinyl-[protein] + A + AMP + diphosphate + H(+). In terms of biological role, catalyzes the 2-thiolation of uridine at the wobble position (U34) of tRNA, leading to the formation of s(2)U34. The polypeptide is tRNA-specific 2-thiouridylase MnmA (Sinorhizobium fredii (strain NBRC 101917 / NGR234)).